The following is a 716-amino-acid chain: MNDRVRSRTIVSAQSITLPKGGDVHLVPPPPKPCVTIVVHGVNDLAGCYERIERGLCQGLNERLDMPPTLPGGQANPGYLTPAGYSLPADDEGKAENPDVVYYRRKFASGAGGAAVRSVVVPFYWGFREEEQYINKTAAHGEWLDRNGNRLDKSGTKEGGQFVNATTNLPDMWGQGFNGKLFGFISLDWFGGTMTHPLFSAAGRKYMVLAAMRLAMLIKIIRKRYPDDTINVVGHSQGTLLTLLAHAFLKDDGVAPADGVIMLNSPYGLFEPLNEKLQGWSSQQTREARLATLKGILEFICGRRHPVPALSSVALRNCQGYGAIGGPGWVGGQGCQTTIDGERLSFDERDNRGSVYLYFTPQDQTVGLANVQGIGWRGIAEQVKGLPGRTGLPQGFHQRIFTVRKRNGEKEKIGGHAPPHVYPLLLAGEKTWEDTGLGGKDRFGRANFDQGDSVLLTAPRLPLPTEARFDFDGAVTAPGENSASGVYQVRDTLDPIDAAIGVSNGGWKEKDSGHAVAQQVDAALAYRYGRDARSVERALNEGKELAQQTHVFSARELGTGMVLVTRAETPYEARLRLQTAEGHLEPLSFHSAIPNNPEHNRRVLAYDLAIGAGDSVDDVVFYQYLCRVADWRLDWKASDKGIFSQGDASVDLPDEEVRALYRAEESKNSQLIDATVAYRKSGEFPVVVGNRLPSLVGTQTILDRYHEQAVRFGGTI.

The tract at residues Pro68–Leu87 is disordered.

Interacts in the cytoplasm with the adapter protein Tla3. Interacts in the periplasm with the immunity protein Tli3.

The protein resides in the secreted. It localises to the host periplasm. Its activity is regulated as follows. Neutralized by the immunity protein Tli3 in the periplasm of P.aeruginosa cells. Its function is as follows. Antibacterial effector. Is toxic once delivered in the periplasm of prey bacteria. This Pseudomonas aeruginosa (strain ATCC 15692 / DSM 22644 / CIP 104116 / JCM 14847 / LMG 12228 / 1C / PRS 101 / PAO1) protein is Antibacterial effector protein Tle3.